The sequence spans 276 residues: Orotidine 5'-phosphate decarboxylase (276 aa).

Residues aspartate 40, 62-64 (KTH), 93-102 (DRKFIDIGNT), tyrosine 228, and arginine 246 each bind substrate. Lysine 95 functions as the Proton donor in the catalytic mechanism.

Belongs to the OMP decarboxylase family.

It catalyses the reaction orotidine 5'-phosphate + H(+) = UMP + CO2. It participates in pyrimidine metabolism; UMP biosynthesis via de novo pathway; UMP from orotate: step 2/2. The protein is Orotidine 5'-phosphate decarboxylase (pyrG) of Penicillium nalgiovense.